The sequence spans 224 residues: Germin-like protein 8-5 (224 aa).

A signal peptide spans 1–22; the sequence is MASPSSLCLLAALALISWQAMA. The cysteines at positions 32 and 47 are disulfide-linked. Residues 62 to 212 form the Cupin type-1 domain; it reads AKLDTPRKTN…AFQVEKGTID (151 aa). N-linked (GlcNAc...) asparagine glycosylation occurs at asparagine 76. The Mn(2+) site is built by histidine 109, histidine 111, and glutamate 116. Residue asparagine 135 is glycosylated (N-linked (GlcNAc...) asparagine). Histidine 157 is a binding site for Mn(2+).

The protein belongs to the germin family. In terms of assembly, oligomer (believed to be a pentamer but probably hexamer).

It localises to the secreted. The protein resides in the extracellular space. The protein localises to the apoplast. In terms of biological role, plays a role in broad-spectrum disease resistance. Probably has no oxalate oxidase activity even if the active site is conserved. This chain is Germin-like protein 8-5, found in Oryza sativa subsp. japonica (Rice).